A 337-amino-acid polypeptide reads, in one-letter code: Protein-glutamate methylesterase/protein-glutamine glutaminase of group 3 operon (337 aa).

The Response regulatory domain occupies 2–119 (KIAIVNDMPL…GDAREAAAPL (118 aa)). Position 53 is a 4-aspartylphosphate (D53). The CheB-type methylesterase domain maps to 144-337 (PLREASQRRG…AGRLTEFFAK (194 aa)). Catalysis depends on residues S160, H187, and D280.

It belongs to the CheB family. Post-translationally, phosphorylated by CheA. Phosphorylation of the N-terminal regulatory domain activates the methylesterase activity.

The protein localises to the cytoplasm. It carries out the reaction [protein]-L-glutamate 5-O-methyl ester + H2O = L-glutamyl-[protein] + methanol + H(+). The catalysed reaction is L-glutaminyl-[protein] + H2O = L-glutamyl-[protein] + NH4(+). Functionally, involved in chemotaxis. Part of a chemotaxis signal transduction system that modulates chemotaxis in response to various stimuli. Catalyzes the demethylation of specific methylglutamate residues introduced into the chemoreceptors (methyl-accepting chemotaxis proteins or MCP) by CheR. Also mediates the irreversible deamidation of specific glutamine residues to glutamic acid. The polypeptide is Protein-glutamate methylesterase/protein-glutamine glutaminase of group 3 operon (Pseudomonas putida (strain ATCC 47054 / DSM 6125 / CFBP 8728 / NCIMB 11950 / KT2440)).